Here is a 295-residue protein sequence, read N- to C-terminus: sn-glycerol-3-phosphate transport system permease protein UgpA (295 aa).

Residues 1 to 11 (MSSSRPVFRSR) are Cytoplasmic-facing. Residues 12–32 (WLPYLLVAPQLVITVIFFIWP) traverse the membrane as a helical segment. The Periplasmic segment spans residues 33 to 80 (AGEALWYSLQSVDPFGFSSQFVGLENFVALFHDSYYLDAFWTTIKFSA). In terms of domain architecture, ABC transmembrane type-1 spans 76-284 (IKFSALVTFS…FLVIILTVVQ (209 aa)). The chain crosses the membrane as a helical span at residues 81-101 (LVTFSGLLVSLFFAALVDYVV). Residues 102 to 109 (RGSRFYQT) lie on the Cytoplasmic side of the membrane. Residues 110–130 (LMLLPYAVAPAVAAVLWIFLF) form a helical membrane-spanning segment. At 131–157 (NPGRGLITHFLGEFGYDWNHAQNSGQA) the chain is on the periplasmic side. A helical membrane pass occupies residues 158–178 (MFLVVFASVWKQISYNFLFFF). The Cytoplasmic portion of the chain corresponds to 179–207 (AALQSIPRSLVEAAAIDGAGPIRRFFRLS). A helical transmembrane segment spans residues 208-228 (LPLIAPVSFFLLVVNLVYAFF). The Periplasmic portion of the chain corresponds to 229 to 262 (DTFPVIDAATAGGPVQATTTLIYKIYCEGFTGLD). The helical transmembrane segment at 263–283 (LSASAAQSVVLMFLVIILTVV) threads the bilayer. Over 284 to 295 (QFRYVESKVRYQ) the chain is Cytoplasmic.

It belongs to the binding-protein-dependent transport system permease family. UgpAE subfamily. In terms of assembly, the complex is composed of two ATP-binding proteins (UgpC), two transmembrane proteins (UgpA and UgpE) and a solute-binding protein (UgpB).

The protein resides in the cell inner membrane. In terms of biological role, part of the ABC transporter complex UgpBAEC involved in sn-glycerol-3-phosphate (G3P) import. Probably responsible for the translocation of the substrate across the membrane. This Salmonella typhi protein is sn-glycerol-3-phosphate transport system permease protein UgpA (ugpA).